The primary structure comprises 189 residues: Probable nicotinate-nucleotide adenylyltransferase (189 aa).

The protein belongs to the NadD family.

The catalysed reaction is nicotinate beta-D-ribonucleotide + ATP + H(+) = deamido-NAD(+) + diphosphate. Its pathway is cofactor biosynthesis; NAD(+) biosynthesis; deamido-NAD(+) from nicotinate D-ribonucleotide: step 1/1. Functionally, catalyzes the reversible adenylation of nicotinate mononucleotide (NaMN) to nicotinic acid adenine dinucleotide (NaAD). The chain is Probable nicotinate-nucleotide adenylyltransferase from Bacillus cytotoxicus (strain DSM 22905 / CIP 110041 / 391-98 / NVH 391-98).